Consider the following 413-residue polypeptide: 3-isopropylmalate dehydratase large subunit (413 aa).

Residues C295, C353, and C356 each contribute to the [4Fe-4S] cluster site.

The protein belongs to the aconitase/IPM isomerase family. LeuC type 2 subfamily. As to quaternary structure, heterodimer of LeuC and LeuD. The cofactor is [4Fe-4S] cluster.

It catalyses the reaction (2R,3S)-3-isopropylmalate = (2S)-2-isopropylmalate. It functions in the pathway amino-acid biosynthesis; L-leucine biosynthesis; L-leucine from 3-methyl-2-oxobutanoate: step 2/4. In terms of biological role, catalyzes the isomerization between 2-isopropylmalate and 3-isopropylmalate, via the formation of 2-isopropylmaleate. The polypeptide is 3-isopropylmalate dehydratase large subunit (Pyrobaculum calidifontis (strain DSM 21063 / JCM 11548 / VA1)).